The chain runs to 673 residues: Protein-arginine deiminase type-2 (673 aa).

M1 bears the N-acetylmethionine mark. D131, D133, D135, E139, N162, D164, D166, D174, D177, K179, D185, and D188 together coordinate Ca(2+). At R352 the chain carries Citrulline. The Ca(2+) site is built by E362, D397, F416, L419, and E420. The active-site Nucleophile is the C655.

It belongs to the protein arginine deiminase family. Homodimer. It depends on Ca(2+) as a cofactor. In terms of tissue distribution, expressed in various tissues including muscle, uterus, spinal cord, salivary gland and pancreas.

Its subcellular location is the cytoplasm. The catalysed reaction is L-arginyl-[protein] + H2O = L-citrullyl-[protein] + NH4(+). Catalyzes the deimination of arginine residues of proteins. In Mus musculus (Mouse), this protein is Protein-arginine deiminase type-2 (Padi2).